The chain runs to 765 residues: Beta-glucosidase cel3A (765 aa).

The signal sequence occupies residues 1–24 (MRWSSPTSSSLSLVALLLVAHVDA). N-linked (GlcNAc...) asparagine glycans are attached at residues Asn-66, Asn-124, Asn-250, Asn-304, Asn-311, Asn-349, Asn-549, Asn-588, Asn-657, and Asn-681.

The protein belongs to the glycosyl hydrolase 3 family.

It is found in the secreted. The catalysed reaction is Hydrolysis of terminal, non-reducing beta-D-glucosyl residues with release of beta-D-glucose.. It participates in glycan metabolism; cellulose degradation. Its function is as follows. Beta-glucosidases are one of a number of cellulolytic enzymes involved in the degradation of cellulosic biomass. Catalyzes the last step releasing glucose from the inhibitory cellobiose. Shows higher activities on cellobiose and cellotriose but lower activities on laminarioligosaccharides and polymers. The polypeptide is Beta-glucosidase cel3A (Pyricularia oryzae (strain 70-15 / ATCC MYA-4617 / FGSC 8958) (Rice blast fungus)).